Consider the following 488-residue polypeptide: MLENKKMEFWFVVGSQHLYGEEALKEVRKNSETIVDELNKSANLPYKIIFKDLATSADKIKEIMKEVNYRDEVAGVITWMHTFSPAKMWIAGTKILQKPLLHFATQYNENIPWKTIDMDYMNLHQSAHGDREYGFINARLKKHNKVVVGYWKDKEVQKQVSDWMKVAAGYIASESIKVARFGDNMRNVAVTEGDKVEAQIQFGWTVDYFGIGDLVAEMDKVSQDEINKTYEEFKDLYILDPGENDPAFYEKQVKEQIKIEIGLRRFLEKGNYNAFTTNFEDLYGMKQLPGLAVQRLNAEGYGFAGEGDWKTAALDRLLKVMTNNTATGFMEDYTYELSRGNEKALGAHMLEVDPTFASDKPKVIVKPLGIGDKEDPARLIFNGSTGKGVAVSMLDLGTHYRLIINGLTAVKPDEDMPNLPVAKMVWKPEPNFIEGVKSWIYAGGGHHTVVSLELTVEQVYDWSRMVGLEAVIIDKDTKLRDIIEKTTK.

Mn(2+)-binding residues include glutamate 306, glutamate 331, histidine 348, and histidine 447.

The protein belongs to the arabinose isomerase family. It depends on Mn(2+) as a cofactor.

It carries out the reaction beta-L-arabinopyranose = L-ribulose. Its pathway is carbohydrate degradation; L-arabinose degradation via L-ribulose; D-xylulose 5-phosphate from L-arabinose (bacterial route): step 1/3. In terms of biological role, catalyzes the conversion of L-arabinose to L-ribulose. The chain is L-arabinose isomerase 2 from Clostridium acetobutylicum (strain ATCC 824 / DSM 792 / JCM 1419 / IAM 19013 / LMG 5710 / NBRC 13948 / NRRL B-527 / VKM B-1787 / 2291 / W).